Here is a 289-residue protein sequence, read N- to C-terminus: Bis(5'-nucleosyl)-tetraphosphatase, symmetrical (289 aa).

It belongs to the Ap4A hydrolase family.

It carries out the reaction P(1),P(4)-bis(5'-adenosyl) tetraphosphate + H2O = 2 ADP + 2 H(+). Hydrolyzes diadenosine 5',5'''-P1,P4-tetraphosphate to yield ADP. This chain is Bis(5'-nucleosyl)-tetraphosphatase, symmetrical, found in Yersinia pestis bv. Antiqua (strain Antiqua).